An 862-amino-acid chain; its full sequence is Short transient receptor potential channel 7 (862 aa).

Positions 1–21 (MLRNSTFKNMQRRHTTLREKG) are disordered. The Cytoplasmic segment spans residues 1 to 351 (MLRNSTFKNM…GLRQQSIAVK (351 aa)). Basic residues predominate over residues 10–21 (MQRRHTTLREKG). At T15 the chain carries Phosphothreonine; by PKG/PRKG1. 4 ANK repeats span residues 42–71 (PEEE…TLNF), 77–106 (MGQN…LARV), 108–134 (DALL…FAQG), and 163–192 (HDIT…RIER). A helical transmembrane segment spans residues 352–372 (FLAVFGVSIGLPFLAIAYWIA). At 373-383 (PCSKLGRTLRS) the chain is on the extracellular side. A helical transmembrane segment spans residues 384 to 404 (PFMKFVAHAVSFTIFLGLLVV). The Cytoplasmic segment spans residues 405–465 (NASDRFEGVK…KEIWEEGPRE (61 aa)). Residues 466 to 486 (YVLHLWNLLDFGMLSIFVASF) form a helical membrane-spanning segment. The Extracellular portion of the chain corresponds to 487 to 537 (TARFMAFLKATEAQLYVDQHVQDDTLHNVSLPPEVAYFTYARDKWWPSDPQ). N-linked (GlcNAc...) asparagine glycosylation is present at N514. The chain crosses the membrane as a helical span at residues 538–558 (IISEGLYAIAVVLSFSRIAYI). Residues 559 to 581 (LPANESFGPLQISLGRTVKDIFK) are Cytoplasmic-facing. The chain crosses the membrane as a helical span at residues 582–602 (FMVIFIMVFVAFMIGMFNLYS). At 603–651 (YYRGAKYNPAFTTVEESFKTLFWSIFGLSEVISVVLKYDHKFIENIGYV) the chain is on the extracellular side. A helical membrane pass occupies residues 652-672 (LYGVYNVTMVVVLLNMLIAMI). Over 673-862 (NNSYQEIEED…HLRVNKGKDI (190 aa)) the chain is Cytoplasmic.

Belongs to the transient receptor (TC 1.A.4) family. STrpC subfamily. TRPC7 sub-subfamily. As to quaternary structure, interacts with MX1 and RNF24. Interacts (via ANK-repeat domains) with PRKG1. In terms of processing, phosphorylation by PRKG1 at Thr-15 negatively regulates TRPC7 activity.

It localises to the cell membrane. The protein localises to the nucleus envelope. It catalyses the reaction Ca(2+)(in) = Ca(2+)(out). Functionally, forms a receptor-activated non-selective calcium permeant cation channel. Probably is operated by a phosphatidylinositol second messenger system activated by receptor tyrosine kinases or G-protein coupled receptors. Activated by diacylglycerol (DAG). May also be activated by intracellular calcium store depletion. This is Short transient receptor potential channel 7 (TRPC7) from Homo sapiens (Human).